The following is a 222-amino-acid chain: Deoxyribose-phosphate aldolase (222 aa).

Asp93 serves as the catalytic Proton donor/acceptor. Lys156 serves as the catalytic Schiff-base intermediate with acetaldehyde. Lys186 acts as the Proton donor/acceptor in catalysis.

Belongs to the DeoC/FbaB aldolase family. DeoC type 1 subfamily.

It localises to the cytoplasm. The catalysed reaction is 2-deoxy-D-ribose 5-phosphate = D-glyceraldehyde 3-phosphate + acetaldehyde. The protein operates within carbohydrate degradation; 2-deoxy-D-ribose 1-phosphate degradation; D-glyceraldehyde 3-phosphate and acetaldehyde from 2-deoxy-alpha-D-ribose 1-phosphate: step 2/2. Its function is as follows. Catalyzes a reversible aldol reaction between acetaldehyde and D-glyceraldehyde 3-phosphate to generate 2-deoxy-D-ribose 5-phosphate. The sequence is that of Deoxyribose-phosphate aldolase from Nocardia farcinica (strain IFM 10152).